A 220-amino-acid chain; its full sequence is Large ribosomal subunit protein bL9 (220 aa).

Positions 167-184 (AAAEVEQAEDVAAAEQQD) are enriched in low complexity. Residues 167 to 220 (AAAEVEQAEDVAAAEQQDSSPVDDHADDADGVADGEGRDEGAGDASDEEEMPST) are disordered. Residues 211-220 (ASDEEEMPST) show a composition bias toward acidic residues.

The protein belongs to the bacterial ribosomal protein bL9 family.

In terms of biological role, binds to the 23S rRNA. The protein is Large ribosomal subunit protein bL9 of Anaplasma marginale (strain Florida).